Reading from the N-terminus, the 90-residue chain is Probable small nuclear ribonucleoprotein E (90 aa).

The region spanning 14–89 is the Sm domain; the sequence is VNLIFRYLQN…ITLIHAAAQE (76 aa).

This sequence belongs to the snRNP Sm proteins family. Core component of the spliceosomal U1, U2, U4 and U5 small nuclear ribonucleoproteins (snRNPs), the building blocks of the spliceosome.

The protein localises to the nucleus. The protein resides in the cytoplasm. It is found in the cytosol. Functionally, plays a role in pre-mRNA splicing as a core component of the spliceosomal U1, U2, U4 and U5 small nuclear ribonucleoproteins (snRNPs), the building blocks of the spliceosome. The protein is Probable small nuclear ribonucleoprotein E (snr-6) of Caenorhabditis briggsae.